The primary structure comprises 281 residues: Voltage-dependent L-type calcium channel subunit alpha-1S (281 aa).

An III repeat occupies 1-8; that stretch reads VGFVIVTF. The dihydropyridine binding stretch occupies residues 1–17; the sequence is VGFVIVTFQEQGESEYK. Residues 45–281 form an IV repeat; the sequence is NPYQYQIWYV…TCGTGFAYFY (237 aa). Residues 59–80 form a helical membrane-spanning segment; sequence YFEYLMFFLIMLNTICLGMQHY. Asn-81 carries N-linked (GlcNAc...) asparagine glycosylation. Residues 89-110 traverse the membrane as a helical segment; that stretch reads VSDILNVAFTVLFTLEMILKLM. The chain crosses the membrane as a helical span at residues 121–140; the sequence is PWNVFDFLIVIGSIIDVILS. Residues 153–171 form a helical membrane-spanning segment; it reads ITFFRLFRVMRLVKLLSRG. A helical membrane pass occupies residues 190–210; it reads YVALLIVMLFFIYAVIGMQMF. Residues 233-251 constitute an intramembrane region (pore-forming); that stretch reads AVLLLFRCATGEAWQEILL. The short motif at 242-245 is the Selectivity filter of repeat IV element; the sequence is TGEA. Residues 258-281 are dihydropyridine binding; it reads RCDPESDYAEGEEYTCGTGFAYFY. Cys-259 and Cys-273 are disulfide-bonded. Positions 270–281 are phenylalkylamine binding; the sequence is EYTCGTGFAYFY.

The protein belongs to the calcium channel alpha-1 subunit (TC 1.A.1.11) family. CACNA1S subfamily. Component of a calcium channel complex consisting of a pore-forming alpha subunit (CACNA1S) and the ancillary subunits CACNB1 or CACNB2, CACNG1 and CACNA2D1. The channel complex contains alpha, beta, gamma and delta subunits in a 1:1:1:1 ratio, i.e. it contains either CACNB1 or CACNB2. CACNA1S channel activity is modulated by the auxiliary subunits (CACNB1 or CACNB2, CACNG1 and CACNA2D1). Interacts with DYSF and JSRP1. Interacts with RYR1. Interacts with CALM. The alpha-1S subunit is found in two isoforms in the skeletal muscle: a minor form of 212 kDa containing the complete amino acid sequence, and a major form of 190 kDa derived from the full-length form by post-translational proteolysis close to Phe-1690. Post-translationally, both the minor and major forms are phosphorylated in vitro by PKA. Phosphorylation by PKA activates the calcium channel.

The protein localises to the cell membrane. The protein resides in the sarcolemma. It is found in the T-tubule. The enzyme catalyses Ca(2+)(in) = Ca(2+)(out). With respect to regulation, channel activity is blocked by dihydropyridines (DHP), phenylalkylamines, and by benzothiazepines. Functionally, pore-forming, alpha-1S subunit of the voltage-gated calcium channel that gives rise to L-type calcium currents in skeletal muscle. Calcium channels containing the alpha-1S subunit play an important role in excitation-contraction coupling in skeletal muscle via their interaction with RYR1, which triggers Ca(2+) release from the sarcplasmic reticulum and ultimately results in muscle contraction. Long-lasting (L-type) calcium channels belong to the 'high-voltage activated' (HVA) group. The protein is Voltage-dependent L-type calcium channel subunit alpha-1S (CACNA1S) of Gallus gallus (Chicken).